Reading from the N-terminus, the 257-residue chain is Zinc transporter ZupT (257 aa).

3 consecutive transmembrane segments (helical) span residues 5–25 (LILT…GVLG), 32–52 (LLAF…LMEM), and 61–81 (GMSP…YFGL). Asparagine 120 and glutamate 123 together coordinate Fe(2+). Zn(2+)-binding residues include glutamate 123 and histidine 148. 4 helical membrane passes run 137-157 (LGFG…LAVA), 171-191 (ILWA…AWLI), 195-215 (MISP…MVAL), and 236-256 (GVLC…TAGI). Fe(2+) is bound by residues asparagine 149, glutamate 152, and glutamate 181. Glutamate 152 lines the Zn(2+) pocket.

The protein belongs to the ZIP transporter (TC 2.A.5) family. ZupT subfamily.

It localises to the cell inner membrane. It catalyses the reaction Zn(2+)(in) = Zn(2+)(out). Functionally, mediates zinc uptake. May also transport other divalent cations. This Escherichia coli O127:H6 (strain E2348/69 / EPEC) protein is Zinc transporter ZupT.